A 144-amino-acid polypeptide reads, in one-letter code: Large ribosomal subunit protein uL15 (144 aa).

The tract at residues 1–54 (MRLNTLSPAEGSKKAGKRLGRGIGSGLGKTGGRGHKGQKSRSGGGVRRGFEGGQ) is disordered. Residues 21–31 (RGIGSGLGKTG) are compositionally biased toward gly residues.

This sequence belongs to the universal ribosomal protein uL15 family. In terms of assembly, part of the 50S ribosomal subunit.

Functionally, binds to the 23S rRNA. In Escherichia coli (strain K12 / MC4100 / BW2952), this protein is Large ribosomal subunit protein uL15.